The primary structure comprises 248 residues: Granulin (248 aa).

Belongs to the polyhedrin family.

Component of the virus occlusion bodies, which are large proteinaceous structures, that protect the virus from the outside environment for extended periods until they are ingested by insect larvae. This chain is Granulin, found in Adoxophyes orana granulovirus (AoGV).